A 107-amino-acid chain; its full sequence is Iron-sulfur cluster assembly protein CyaY (107 aa).

It belongs to the frataxin family.

Its function is as follows. Involved in iron-sulfur (Fe-S) cluster assembly. May act as a regulator of Fe-S biogenesis. This Edwardsiella ictaluri (strain 93-146) protein is Iron-sulfur cluster assembly protein CyaY.